Reading from the N-terminus, the 890-residue chain is DNA mismatch repair protein MutS (890 aa).

Position 645–652 (645–652 (GPNMAGKS)) interacts with ATP.

Belongs to the DNA mismatch repair MutS family.

Functionally, this protein is involved in the repair of mismatches in DNA. It is possible that it carries out the mismatch recognition step. This protein has a weak ATPase activity. The sequence is that of DNA mismatch repair protein MutS from Rickettsia africae (strain ESF-5).